We begin with the raw amino-acid sequence, 342 residues long: Nicotinate-nucleotide--dimethylbenzimidazole phosphoribosyltransferase (342 aa).

E311 acts as the Proton acceptor in catalysis.

It belongs to the CobT family.

It carries out the reaction 5,6-dimethylbenzimidazole + nicotinate beta-D-ribonucleotide = alpha-ribazole 5'-phosphate + nicotinate + H(+). It functions in the pathway nucleoside biosynthesis; alpha-ribazole biosynthesis; alpha-ribazole from 5,6-dimethylbenzimidazole: step 1/2. In terms of biological role, catalyzes the synthesis of alpha-ribazole-5'-phosphate from nicotinate mononucleotide (NAMN) and 5,6-dimethylbenzimidazole (DMB). In Shewanella sediminis (strain HAW-EB3), this protein is Nicotinate-nucleotide--dimethylbenzimidazole phosphoribosyltransferase.